A 392-amino-acid polypeptide reads, in one-letter code: uncharacterized protein (392 aa).

The protein belongs to the glycosyltransferase group 1 family. Glycosyltransferase 4 subfamily.

This is an uncharacterized protein from Methanocaldococcus jannaschii (strain ATCC 43067 / DSM 2661 / JAL-1 / JCM 10045 / NBRC 100440) (Methanococcus jannaschii).